The sequence spans 234 residues: Large ribosomal subunit protein uL1 (234 aa).

This sequence belongs to the universal ribosomal protein uL1 family. Part of the 50S ribosomal subunit.

Binds directly to 23S rRNA. The L1 stalk is quite mobile in the ribosome, and is involved in E site tRNA release. Its function is as follows. Protein L1 is also a translational repressor protein, it controls the translation of the L11 operon by binding to its mRNA. This is Large ribosomal subunit protein uL1 from Wolinella succinogenes (strain ATCC 29543 / DSM 1740 / CCUG 13145 / JCM 31913 / LMG 7466 / NCTC 11488 / FDC 602W) (Vibrio succinogenes).